The chain runs to 364 residues: Glutamine synthetase (364 aa).

In terms of domain architecture, GS beta-grasp spans 15–94 (VLAEYIWIDA…VLAECWNNDG (80 aa)). One can recognise a GS catalytic domain in the interval 101–364 (HRHECAKLMS…ETKRGEEEGF (264 aa)).

Belongs to the glutamine synthetase family. Homooctamer.

It localises to the cytoplasm. It carries out the reaction L-glutamate + NH4(+) + ATP = L-glutamine + ADP + phosphate + H(+). This is Glutamine synthetase (GLN1) from Yarrowia lipolytica (strain CLIB 122 / E 150) (Yeast).